The primary structure comprises 31 residues: Kappa-sparatoxin-Hv1c (31 aa).

3 disulfides stabilise this stretch: C2–C16, C9–C21, and C15–C25. W31 carries the post-translational modification Tryptophan amide.

As to expression, expressed by the venom gland.

The protein resides in the secreted. In terms of biological role, blocks transient outward voltage-gated potassium channels in rat ventricular myocytes (thus prolonging action-potential duration) and rat Kv4.2/KCNA4 channels expressed in Xenopus oocytes. Is also a weak blocker of calcium channels in rat cerebellar granule cells. In Heteropoda venatoria (Brown huntsman spider), this protein is Kappa-sparatoxin-Hv1c.